The following is a 238-amino-acid chain: tRNA (guanine-N(7)-)-methyltransferase (238 aa).

Residues Glu-68, Glu-93, Asp-120, and Asp-143 each coordinate S-adenosyl-L-methionine. Residue Asp-143 is part of the active site. Substrate-binding positions include Lys-147, Asp-179, and 216–219 (TKFE).

Belongs to the class I-like SAM-binding methyltransferase superfamily. TrmB family.

It catalyses the reaction guanosine(46) in tRNA + S-adenosyl-L-methionine = N(7)-methylguanosine(46) in tRNA + S-adenosyl-L-homocysteine. The protein operates within tRNA modification; N(7)-methylguanine-tRNA biosynthesis. In terms of biological role, catalyzes the formation of N(7)-methylguanine at position 46 (m7G46) in tRNA. This Aliivibrio fischeri (strain MJ11) (Vibrio fischeri) protein is tRNA (guanine-N(7)-)-methyltransferase.